The chain runs to 414 residues: NADH-quinone oxidoreductase subunit D (414 aa).

The protein belongs to the complex I 49 kDa subunit family. In terms of assembly, NDH-1 is composed of 14 different subunits. Subunits NuoB, C, D, E, F, and G constitute the peripheral sector of the complex.

It localises to the cell inner membrane. It carries out the reaction a quinone + NADH + 5 H(+)(in) = a quinol + NAD(+) + 4 H(+)(out). NDH-1 shuttles electrons from NADH, via FMN and iron-sulfur (Fe-S) centers, to quinones in the respiratory chain. The immediate electron acceptor for the enzyme in this species is believed to be ubiquinone. Couples the redox reaction to proton translocation (for every two electrons transferred, four hydrogen ions are translocated across the cytoplasmic membrane), and thus conserves the redox energy in a proton gradient. This chain is NADH-quinone oxidoreductase subunit D, found in Akkermansia muciniphila (strain ATCC BAA-835 / DSM 22959 / JCM 33894 / BCRC 81048 / CCUG 64013 / CIP 107961 / Muc).